The chain runs to 700 residues: Autophagy-related protein 13 (700 aa).

The disordered stretch occupies residues 319-352 (GSINSSSSPPPGATQSNQSVSSFSTSKPIPVTLN). Positions 332–344 (TQSNQSVSSFSTS) are enriched in low complexity. The segment at 399 to 407 (SSFGSRFRT) is ATG17-binding. Residues 428 to 487 (TPNNPILHNFRSRNKSPSVSSTELGPSSSIYMDDDLDSFMKMLDSKPDLRFPSNSPSVYE) are ATG1-binding. Residues 506–532 (EQQQHGSPSSNQIMIHSQSQTSQSQVF) show a composition bias toward polar residues. Disordered regions lie at residues 506–562 (EQQQ…PGVS), 576–637 (HASS…NPEL), and 649–700 (ESDD…NQEF). Residues 595-631 (SSPPASATAVATVHNSLRRLTSSSQRTNTNSTNSSTR) show a composition bias toward low complexity. Residues 656–667 (DEHSPRSTDTKS) show a composition bias toward basic and acidic residues.

The protein belongs to the ATG13 family. Fungi subfamily. As to quaternary structure, hypophosphorylated form interacts with ATG1 to form the ATG1-ATG13 kinase complex. The ATG1-ATG13 complex interacts with the ATG17-ATG29-ATG31 complex through direct interaction with ATG17. Interacts with VAC8.

The protein resides in the cytoplasm. It is found in the preautophagosomal structure. Functionally, activates the ATG1 kinase in a nutritional condition dependent manner through the TOR pathway, leading to autophagy. Involved in ATG9 and ATG23 cycling through the pre-autophagosomal structure. Also involved in cytoplasm to vacuole transport (Cvt) and more specifically in Cvt vesicle formation. Seems to play a role in the switching machinery regulating the conversion between the Cvt pathway and autophagy. Finally, ATG13 is also required for glycogen storage during stationary phase. Its function is as follows. Acts as a negative regulator of xylose alcoholic fermentation, a role that is not related to autophagy. This is Autophagy-related protein 13 from Ogataea parapolymorpha (strain ATCC 26012 / BCRC 20466 / JCM 22074 / NRRL Y-7560 / DL-1) (Yeast).